The sequence spans 511 residues: ATP synthase subunit alpha 2 (511 aa).

Gly173–Ser180 lines the ATP pocket.

The protein belongs to the ATPase alpha/beta chains family. In terms of assembly, F-type ATPases have 2 components, CF(1) - the catalytic core - and CF(0) - the membrane proton channel. CF(1) has five subunits: alpha(3), beta(3), gamma(1), delta(1), epsilon(1). CF(0) has three main subunits: a(1), b(2) and c(9-12). The alpha and beta chains form an alternating ring which encloses part of the gamma chain. CF(1) is attached to CF(0) by a central stalk formed by the gamma and epsilon chains, while a peripheral stalk is formed by the delta and b chains.

It localises to the cell inner membrane. It carries out the reaction ATP + H2O + 4 H(+)(in) = ADP + phosphate + 5 H(+)(out). In terms of biological role, produces ATP from ADP in the presence of a proton gradient across the membrane. The alpha chain is a regulatory subunit. The chain is ATP synthase subunit alpha 2 from Nitrosospira multiformis (strain ATCC 25196 / NCIMB 11849 / C 71).